We begin with the raw amino-acid sequence, 105 residues long: Small ribosomal subunit protein uS10 (105 aa).

It belongs to the universal ribosomal protein uS10 family. In terms of assembly, part of the 30S ribosomal subunit.

Involved in the binding of tRNA to the ribosomes. The polypeptide is Small ribosomal subunit protein uS10 (Phytoplasma australiense).